The primary structure comprises 283 residues: Large ribosomal subunit protein uL2 (283 aa).

Disordered regions lie at residues 34-53 and 224-283; these read TEPY…TARH and AMNP…KKKK. Over residues 232 to 245 the composition is skewed to gly residues; the sequence is NGGGQGKSKGGGGW. A compositionally biased stretch (basic residues) spans 256 to 268; that stretch reads AKGKKTRHKRKNS.

It belongs to the universal ribosomal protein uL2 family. In terms of assembly, part of the 50S ribosomal subunit. Forms a bridge to the 30S subunit in the 70S ribosome.

One of the primary rRNA binding proteins. Required for association of the 30S and 50S subunits to form the 70S ribosome, for tRNA binding and peptide bond formation. It has been suggested to have peptidyltransferase activity; this is somewhat controversial. Makes several contacts with the 16S rRNA in the 70S ribosome. This is Large ribosomal subunit protein uL2 from Methylacidiphilum infernorum (isolate V4) (Methylokorus infernorum (strain V4)).